Consider the following 202-residue polypeptide: Xanthine phosphoribosyltransferase (202 aa).

Residues Leu-20 and Asn-27 each coordinate xanthine. 5-phospho-alpha-D-ribose 1-diphosphate is bound at residue 128 to 132 (ANGEA). Lys-156 contacts xanthine.

This sequence belongs to the purine/pyrimidine phosphoribosyltransferase family. Xpt subfamily. In terms of assembly, homodimer.

It is found in the cytoplasm. The catalysed reaction is XMP + diphosphate = xanthine + 5-phospho-alpha-D-ribose 1-diphosphate. It participates in purine metabolism; XMP biosynthesis via salvage pathway; XMP from xanthine: step 1/1. Converts the preformed base xanthine, a product of nucleic acid breakdown, to xanthosine 5'-monophosphate (XMP), so it can be reused for RNA or DNA synthesis. This chain is Xanthine phosphoribosyltransferase, found in Alkaliphilus metalliredigens (strain QYMF).